A 532-amino-acid polypeptide reads, in one-letter code: tRNA-2-methylthio-N(6)-dimethylallyladenosine synthase 2 (532 aa).

Positions 1-21 are disordered; the sequence is MTSTVAHGAGSAGPADDAEPM. The MTTase N-terminal domain occupies 24–140; the sequence is RTYQVRTYGC…LPALLDRARH (117 aa). Positions 33, 69, 103, 177, 181, and 184 each coordinate [4Fe-4S] cluster. In terms of domain architecture, Radical SAM core spans 163-399; the sequence is RESAYAAWVS…VELQEQISLE (237 aa). In terms of domain architecture, TRAM spans 402–470; that stretch reads RAIVGQRVEL…PHHLIADGGI (69 aa). The disordered stretch occupies residues 510-532; sequence TSCGSAGGCGSADGAGSSAGDPQ. Residues 523–532 show a composition bias toward low complexity; sequence GAGSSAGDPQ.

It belongs to the methylthiotransferase family. MiaB subfamily. In terms of assembly, monomer. The cofactor is [4Fe-4S] cluster.

It is found in the cytoplasm. It catalyses the reaction N(6)-dimethylallyladenosine(37) in tRNA + (sulfur carrier)-SH + AH2 + 2 S-adenosyl-L-methionine = 2-methylsulfanyl-N(6)-dimethylallyladenosine(37) in tRNA + (sulfur carrier)-H + 5'-deoxyadenosine + L-methionine + A + S-adenosyl-L-homocysteine + 2 H(+). Its function is as follows. Catalyzes the methylthiolation of N6-(dimethylallyl)adenosine (i(6)A), leading to the formation of 2-methylthio-N6-(dimethylallyl)adenosine (ms(2)i(6)A) at position 37 in tRNAs that read codons beginning with uridine. The chain is tRNA-2-methylthio-N(6)-dimethylallyladenosine synthase 2 from Mycobacterium marinum (strain ATCC BAA-535 / M).